A 101-amino-acid polypeptide reads, in one-letter code: Urease subunit beta (101 aa).

The protein belongs to the urease beta subunit family. Heterotrimer of UreA (gamma), UreB (beta) and UreC (alpha) subunits. Three heterotrimers associate to form the active enzyme.

The protein resides in the cytoplasm. It catalyses the reaction urea + 2 H2O + H(+) = hydrogencarbonate + 2 NH4(+). Its pathway is nitrogen metabolism; urea degradation; CO(2) and NH(3) from urea (urease route): step 1/1. The protein is Urease subunit beta of Sinorhizobium medicae (strain WSM419) (Ensifer medicae).